A 152-amino-acid polypeptide reads, in one-letter code: Ribosome maturation factor RimP (152 aa).

Belongs to the RimP family.

The protein localises to the cytoplasm. Functionally, required for maturation of 30S ribosomal subunits. In Escherichia coli (strain K12 / MC4100 / BW2952), this protein is Ribosome maturation factor RimP.